Here is a 436-residue protein sequence, read N- to C-terminus: Cyclic nucleotide-binding domain-containing protein 1 (436 aa).

Basic and acidic residues predominate over residues 89 to 105 (EQRELNEGKEESQHQQP). The segment at 89–108 (EQRELNEGKEESQHQQPDDS) is disordered. 322 to 436 (YYEEWPTLSI…IIEDKDLFVA (115 aa)) serves as a coordination point for a nucleoside 3',5'-cyclic phosphate.

The chain is Cyclic nucleotide-binding domain-containing protein 1 (CNBD1) from Homo sapiens (Human).